The chain runs to 289 residues: GTPase Era (289 aa).

In terms of domain architecture, Era-type G spans 2-167; the sequence is KSGFISLIGR…LDEIYKYLPE (166 aa). Residues 10 to 17 form a G1 region; it reads GRTNAGKS. 10-17 is a GTP binding site; that stretch reads GRTNAGKS. Residues 36–40 form a G2 region; the sequence is NATRR. The segment at 57 to 60 is G3; the sequence is DTPG. Residues 57-61 and 116-119 contribute to the GTP site; these read DTPGL and TKID. The G4 stretch occupies residues 116–119; sequence TKID. The G5 stretch occupies residues 146 to 148; sequence LSV. In terms of domain architecture, KH type-2 spans 198 to 274; sequence VSDEVPYSTD…FLKINVKIDK (77 aa).

It belongs to the TRAFAC class TrmE-Era-EngA-EngB-Septin-like GTPase superfamily. Era GTPase family. As to quaternary structure, monomer.

Its subcellular location is the cytoplasm. The protein localises to the cell inner membrane. An essential GTPase that binds both GDP and GTP, with rapid nucleotide exchange. Plays a role in 16S rRNA processing and 30S ribosomal subunit biogenesis and possibly also in cell cycle regulation and energy metabolism. In Campylobacter fetus subsp. fetus (strain 82-40), this protein is GTPase Era.